Here is a 526-residue protein sequence, read N- to C-terminus: Tyrosine-protein kinase transforming protein Src (526 aa).

The disordered stretch occupies residues 1–52 (MGSSKSKPKDPSQRRRSLEPPDSTHHGGFPASQTPDETAAPDAHRNPSRSFG). Residue glycine 2 is the site of N-myristoyl glycine; by host attachment. Residues 7 to 25 (KPKDPSQRRRSLEPPDSTH) show a composition bias toward basic and acidic residues. The 62-residue stretch at 81–142 (GGVTTFVALY…PSNYVAPSDS (62 aa)) folds into the SH3 domain. Residues 148–245 (WYFGKITRRE…GLCHRLTNVC (98 aa)) enclose the SH2 domain. The region spanning 267–517 (LRLEAKLGQG…TFKYLQAQLL (251 aa)) is the Protein kinase domain. ATP-binding positions include 273-281 (LGQGCFGEV) and lysine 295. The Proton acceptor role is filled by aspartate 386. Phosphotyrosine; by autocatalysis is present on tyrosine 416.

The protein belongs to the protein kinase superfamily. Tyr protein kinase family. SRC subfamily. Mn(2+) serves as cofactor. Post-translationally, the phosphorylated form is termed pp60v-src.

The enzyme catalyses L-tyrosyl-[protein] + ATP = O-phospho-L-tyrosyl-[protein] + ADP + H(+). In terms of biological role, this phosphoprotein, required for both the initiation and the maintenance of neoplastic transformation, is a protein kinase that catalyzes the phosphorylation of tyrosine residues in vitro. The protein is Tyrosine-protein kinase transforming protein Src (V-SRC) of Gallus gallus (Chicken).